A 198-amino-acid polypeptide reads, in one-letter code: Probable molybdenum cofactor guanylyltransferase (198 aa).

GTP-binding positions include 11–13 (LAG), lysine 23, aspartate 71, and aspartate 102. Position 102 (aspartate 102) interacts with Mg(2+).

Belongs to the MobA family. Mg(2+) is required as a cofactor.

The protein localises to the cytoplasm. The enzyme catalyses Mo-molybdopterin + GTP + H(+) = Mo-molybdopterin guanine dinucleotide + diphosphate. Its function is as follows. Transfers a GMP moiety from GTP to Mo-molybdopterin (Mo-MPT) cofactor (Moco or molybdenum cofactor) to form Mo-molybdopterin guanine dinucleotide (Mo-MGD) cofactor. This Halalkalibacterium halodurans (strain ATCC BAA-125 / DSM 18197 / FERM 7344 / JCM 9153 / C-125) (Bacillus halodurans) protein is Probable molybdenum cofactor guanylyltransferase.